The sequence spans 226 residues: Large ribosomal subunit protein mL67 (226 aa).

It belongs to the mitochondrion-specific ribosomal protein mL67 family. Component of the mitochondrial large ribosomal subunit (mt-LSU). Mature yeast 74S mitochondrial ribosomes consist of a small (37S) and a large (54S) subunit. The 37S small subunit contains a 15S ribosomal RNA (15S mt-rRNA) and 34 different proteins. The 54S large subunit contains a 21S rRNA (21S mt-rRNA) and 46 different proteins.

The protein resides in the nucleus. It localises to the mitochondrion. In terms of biological role, component of the mitochondrial ribosome (mitoribosome), a dedicated translation machinery responsible for the synthesis of mitochondrial genome-encoded proteins, including at least some of the essential transmembrane subunits of the mitochondrial respiratory chain. The mitoribosomes are attached to the mitochondrial inner membrane and translation products are cotranslationally integrated into the membrane. mL67/MHR1 also has extraribosomal functions, being involved in regulation of mitochondrial DNA recombination, maintenance and repair, and generation of homoplasmic cells. mL67/MHR1 also acts as transcription factor involved in regulation of RNA polymerase II-dependent transcription. The chain is Large ribosomal subunit protein mL67 (MHR1) from Saccharomyces cerevisiae (strain ATCC 204508 / S288c) (Baker's yeast).